Reading from the N-terminus, the 433-residue chain is tRNA(Ile2) 2-agmatinylcytidine synthetase TiaS (433 aa).

Belongs to the TiaS family.

Its subcellular location is the cytoplasm. The enzyme catalyses cytidine(34) in tRNA(Ile2) + agmatine + ATP + H2O = 2-agmatinylcytidine(34) in tRNA(Ile2) + AMP + 2 phosphate + 2 H(+). Functionally, ATP-dependent agmatine transferase that catalyzes the formation of 2-agmatinylcytidine (agm2C) at the wobble position (C34) of tRNA(Ile2), converting the codon specificity from AUG to AUA. In Methanopyrus kandleri (strain AV19 / DSM 6324 / JCM 9639 / NBRC 100938), this protein is tRNA(Ile2) 2-agmatinylcytidine synthetase TiaS.